The sequence spans 589 residues: Growth factor receptor-bound protein 10 (589 aa).

Disordered regions lie at residues 1-51 (MALA…EDDV) and 77-107 (LHNG…VPRS). A Phosphoserine modification is found at serine 99. Serine 145 is modified (phosphoserine; by MTOR, MAPK1 and MAPK3). The region spanning 161–245 (AKQDVKVFSE…SKFLFRKNYA (85 aa)) is the Ras-associating domain. In terms of domain architecture, PH spans 285–394 (CPEIQGFLHV…WMTAFRLLKY (110 aa)). The residue at position 413 (serine 413) is a Phosphoserine; by MAPK1 and MAPK3; in vitro. The residue at position 423 (serine 423) is a Phosphoserine; by MTOR and PKB/AKT1. Serine 426 is subject to Phosphoserine. Serine 471 is subject to Phosphoserine; by MTOR, MAPK1 and MAPK3. In terms of domain architecture, SH2 spans 488-584 (WFHGRISREE…VLPCKLKHHC (97 aa)).

Belongs to the GRB7/10/14 family. In terms of assembly, interacts with ligand-activated tyrosine kinase receptors, including FGFR1, INSR, IGF1R, MET and PDGFRB in a phosphotyrosine-dependent manner through the SH2 domain. Poorly binds to the EGFR. Directly interacts with MAP3K14/NIK and is recruited to the EGFR-ERBB2 complex. Interacts with GIGYF1/PERQ1 and GIGYF2/TNRC15. When unphosphorylated, interacts with AKT1 and when phosphorylated with YWHAE/14-3-3 epsilon. Interacts with NEDD4. Interacts with LRP6, thus interfering with the binding of AXIN1 to LRP6. Binds relatively non-specifically to several phosphoinositides, including PI(5)P, PI(4,5)P2, PI(3,4)P2 and PI(3,4,5)P3, with modest affinities through the PH domain. Binds to activated NRAS. Post-translationally, phosphorylated on serine residues upon EGF, FGF and PDGF stimulation.

The protein localises to the cytoplasm. Phosphorylation by mTORC1 stabilizes and activates GRB10 constituting a feedback pathway by which mTORC1 inhibits INSR-dependent signaling. In terms of biological role, adapter protein which modulates coupling of a number of cell surface receptor kinases with specific signaling pathways. Binds to, and suppress signals from, activated receptors tyrosine kinases, including the insulin (INSR) and insulin-like growth factor (IGF1R) receptors. The inhibitory effect can be achieved by 2 mechanisms: interference with the signaling pathway and increased receptor degradation. Delays and reduces AKT1 phosphorylation in response to insulin stimulation. Blocks association between INSR and IRS1 and IRS2 and prevents insulin-stimulated IRS1 and IRS2 tyrosine phosphorylation. Recruits NEDD4 to IGF1R, leading to IGF1R ubiquitination, increased internalization and degradation by both the proteasomal and lysosomal pathways. A similar role in the mediation of ubiquitination also has been suggested with INSR. Negatively regulates Wnt signaling by interacting with LRP6 intracellular portion and interfering with the binding of AXIN1 to LRP6. Positive regulator of the KDR/VEGFR-2 signaling pathway. May inhibit NEDD4-mediated degradation of KDR/VEGFR-2. The sequence is that of Growth factor receptor-bound protein 10 (Grb10) from Sus scrofa (Pig).